Consider the following 443-residue polypeptide: Intermediate filament protein ifd-2 (443 aa).

The tract at residues Met1–Glu58 is head. In terms of domain architecture, IF rod spans Glu55–Arg405. Residues Ile59 to Phe90 form a coil 1A region. Positions Arg91–Tyr104 are linker 1. The segment at Phe105–Glu239 is coil 1B. The linker 12 stretch occupies residues Ile240–Asn257. The coil 2 stretch occupies residues Glu258 to His403. The tail stretch occupies residues Leu404–Leu443.

This sequence belongs to the intermediate filament family.

It localises to the cytoplasm. Its function is as follows. Cytoplasmic intermediate filaments provide mechanical strength to cells. Not essential protein. The sequence is that of Intermediate filament protein ifd-2 (ifd-2) from Caenorhabditis elegans.